A 482-amino-acid polypeptide reads, in one-letter code: Glutamate--tRNA ligase (482 aa).

A 'HIGH' region motif is present at residues 9–19 (PSPTGYLHIGG). A 'KMSKS' region motif is present at residues 252–256 (KLSKR). Lysine 255 contacts ATP.

The protein belongs to the class-I aminoacyl-tRNA synthetase family. Glutamate--tRNA ligase type 1 subfamily. In terms of assembly, monomer.

It localises to the cytoplasm. The enzyme catalyses tRNA(Glu) + L-glutamate + ATP = L-glutamyl-tRNA(Glu) + AMP + diphosphate. Its function is as follows. Catalyzes the attachment of glutamate to tRNA(Glu) in a two-step reaction: glutamate is first activated by ATP to form Glu-AMP and then transferred to the acceptor end of tRNA(Glu). The chain is Glutamate--tRNA ligase from Ureaplasma parvum serovar 3 (strain ATCC 27815 / 27 / NCTC 11736).